Consider the following 121-residue polypeptide: Large ribosomal subunit protein uL18 (121 aa).

Belongs to the universal ribosomal protein uL18 family. As to quaternary structure, part of the 50S ribosomal subunit; part of the 5S rRNA/L5/L18/L25 subcomplex. Contacts the 5S and 23S rRNAs.

Its function is as follows. This is one of the proteins that bind and probably mediate the attachment of the 5S RNA into the large ribosomal subunit, where it forms part of the central protuberance. The polypeptide is Large ribosomal subunit protein uL18 (Moorella thermoacetica (strain ATCC 39073 / JCM 9320)).